Here is a 743-residue protein sequence, read N- to C-terminus: Dolichyl-phosphate-mannose--protein mannosyltransferase 5 (743 aa).

Topologically, residues 1–46 are lumenal; it reads MNKEHLLKVDPIPDVTIKRGPLRSFLITKPCDNLSSLRTVTSSKEK. The N-linked (GlcNAc...) asparagine glycan is linked to asparagine 33. A helical transmembrane segment spans residues 47–67; it reads LLVGCLLIFTAIVRLHNISLP. Residues 68 to 129 lie on the Cytoplasmic side of the membrane; that stretch reads NSVVFGENEV…IGTEYTANVP (62 aa). The chain crosses the membrane as a helical span at residues 130 to 150; it reads YVAMRFFSATLGIVSVLVLYL. Over 151–158 the chain is Lumenal; the sequence is TLRVSGVK. A helical membrane pass occupies residues 159 to 179; sequence IAVAAICAVCFAIENSFVTLS. A topological domain (cytoplasmic) is located at residue arginine 180. Residues 181–201 form a helical membrane-spanning segment; that stretch reads FTLIEGPFVFFMACAVYFFRR. Over 202–231 the chain is Lumenal; the sequence is SELYLPNSCKANKSLLAASIALGFAVSSKW. An N-linked (GlcNAc...) asparagine glycan is attached at asparagine 213. Residues 232–252 form a helical membrane-spanning segment; it reads AGLFTIAWAGIIVLWRVWFMI. At 253–264 the chain is on the cytoplasmic side; it reads GDLSRPIGSSIK. Residues 265 to 285 traverse the membrane as a helical segment; the sequence is YMAFQFTCLLAIPAFIYFLIF. Residues 286 to 583 lie on the Lumenal side of the membrane; sequence SVHIKTLNVN…GREVYFLGNA (298 aa). Residues 320-374 form the MIR 1 domain; sequence VAEVAVGSAVSLNHVGTAGGYLHSHLHNYPAGSMQQQVTLYPHIDQNNKWIIELA. Asparagine 380 and asparagine 386 each carry an N-linked (GlcNAc...) asparagine glycan. MIR domains are found at residues 384–444 and 454–510; these read FQNL…IEID and QEHI…IEEN. The helical transmembrane segment at 584-604 threads the bilayer; sequence VLWWSVTAFICTFIIGVAVEL. Topologically, residues 605 to 623 are cytoplasmic; the sequence is LAWKLGVNILRDKHIINFH. Residues 624 to 644 traverse the membrane as a helical segment; it reads YQVFQYLLGFAAHYFPYFFVG. Residues 645 to 646 lie on the Lumenal side of the membrane; sequence QK. Residues 647–667 traverse the membrane as a helical segment; it reads LFLYDYLPAYYFGILAFGHAL. Topologically, residues 668 to 683 are cytoplasmic; sequence DLISTYISNKRNNTGY. The chain crosses the membrane as a helical span at residues 684–704; sequence IVVAIFMVVCFYFFSEHSPLI. Over 705–743 the chain is Lumenal; that stretch reads YATGWSSNLCKRSKWLGSWDFYCNSLLLSDSHYELNAES.

The protein belongs to the glycosyltransferase 39 family. As to quaternary structure, PMT3 and PMT5 form a functional heterodimer. Also forms a minor complex with PMT2.

Its subcellular location is the endoplasmic reticulum membrane. It carries out the reaction a di-trans,poly-cis-dolichyl beta-D-mannosyl phosphate + L-seryl-[protein] = 3-O-(alpha-D-mannosyl)-L-seryl-[protein] + a di-trans,poly-cis-dolichyl phosphate + H(+). The enzyme catalyses a di-trans,poly-cis-dolichyl beta-D-mannosyl phosphate + L-threonyl-[protein] = 3-O-(alpha-D-mannosyl)-L-threonyl-[protein] + a di-trans,poly-cis-dolichyl phosphate + H(+). It functions in the pathway protein modification; protein glycosylation. Functionally, protein O-mannosyltransferase involved in O-glycosylation which is essential for cell wall rigidity. Forms a heterodimeric complex with PMT3 and more rarely with PMT2 to transfer mannose from Dol-P-mannose to Ser or Thr residues on proteins. The protein is Dolichyl-phosphate-mannose--protein mannosyltransferase 5 of Saccharomyces cerevisiae (strain ATCC 204508 / S288c) (Baker's yeast).